The primary structure comprises 400 residues: MDSSAVPTNASNCTDALAHSSCSPARSPGSWVNLSHLDGNLSDPCGPNRTDLGGRDSLCPPTGSPSMITAITIMALYSIVCVVGLFGNFLVMYVIVRYTKMKTATNIYIFNLALADALVTSTLPFQSVNYLMGTWPFGTILCKIVISIDYYNMSTSIFTLCTMSVDRYIAVCHPVKALDFRTPRNAKIINVCNWILSSAIGLPVMFMATTKYRQGSIDCTLTFSHPSWYWENLLKICVFIFAFIMPVLIITVCYGLMILRLKSVRMLSGSKEKDRNLRRITRMVLVVVAVFIICWTPIHIYVIIKALVTIPETTFQTVSWHFCIALGYTNSCLNPVLYAFLDEDFKRCFREFCIPTSSNIEQQNSTRIRQNTRDHPSTANTVDRTNHQLENLEAETAPLP.

Over 1–68 (MDSSAVPTNA…CPPTGSPSMI (68 aa)) the chain is Extracellular. N-linked (GlcNAc...) asparagine glycosylation is found at asparagine 9, asparagine 12, asparagine 33, asparagine 40, and asparagine 48. A helical membrane pass occupies residues 69-93 (TAITIMALYSIVCVVGLFGNFLVMY). At 94–106 (VIVRYTKMKTATN) the chain is on the cytoplasmic side. Residues 107–131 (IYIFNLALADALVTSTLPFQSVNYL) traverse the membrane as a helical segment. Residues 132 to 142 (MGTWPFGTILC) are Extracellular-facing. An intrachain disulfide couples cysteine 142 to cysteine 219. Residues 143–165 (KIVISIDYYNMSTSIFTLCTMSV) traverse the membrane as a helical segment. Residues 166–185 (DRYIAVCHPVKALDFRTPRN) lie on the Cytoplasmic side of the membrane. At tyrosine 168 the chain carries Phosphotyrosine. The chain crosses the membrane as a helical span at residues 186-207 (AKIINVCNWILSSAIGLPVMFM). Over 208–230 (ATTKYRQGSIDCTLTFSHPSWYW) the chain is Extracellular. Residues 231–255 (ENLLKICVFIFAFIMPVLIITVCYG) form a helical membrane-spanning segment. Topologically, residues 256–283 (LMILRLKSVRMLSGSKEKDRNLRRITRM) are cytoplasmic. A helical transmembrane segment spans residues 284–306 (VLVVVAVFIICWTPIHIYVIIKA). Residues 307–314 (LVTIPETT) lie on the Extracellular side of the membrane. Residues 315–338 (FQTVSWHFCIALGYTNSCLNPVLY) traverse the membrane as a helical segment. An NPxxY; plays a role in stabilizing the activated conformation of the receptor motif is present at residues 334-338 (NPVLY). Over 339–400 (AFLDEDFKRC…NLEAETAPLP (62 aa)) the chain is Cytoplasmic. Cysteine 353 carries the S-palmitoyl cysteine lipid modification. The disordered stretch occupies residues 364–386 (NSTRIRQNTRDHPSTANTVDRTN). The residue at position 365 (serine 365) is a Phosphoserine. A Phosphothreonine modification is found at threonine 372. Position 377 is a phosphoserine (serine 377). Phosphothreonine is present on threonine 396.

The protein belongs to the G-protein coupled receptor 1 family. As to quaternary structure, forms homooligomers and heterooligomers with other GPCRs, such as OPRD1, OPRK1, OPRL1, NPFFR2, ADRA2A, SSTR2, CNR1 and CCR5 (probably in dimeric forms). Interacts with heterotrimeric G proteins; interaction with a heterotrimeric complex containing GNAI1, GNB1 and GNG2 stabilizes the active conformation of the receptor and increases its affinity for endomorphin-2, the synthetic opioid peptide DAMGO and for morphinan agonists. Interacts with PPL; the interaction disrupts agonist-mediated G-protein activation. Interacts (via C-terminus) with DNAJB4 (via C-terminus). Interacts with calmodulin; the interaction inhibits the constitutive activity of OPRM1; it abolishes basal and attenuates agonist-stimulated G-protein coupling. Interacts with FLNA, PLD2, RANBP9 and WLS and GPM6A. Interacts with RTP4. Interacts with SYP and GNAS. Interacts with RGS9, RGS17, RGS20, RGS4, PPP1R9B and HINT1. Post-translationally, phosphorylated. Differentially phosphorylated in basal and agonist-induced conditions. Agonist-mediated phosphorylation modulates receptor internalization. Phosphorylated by GRK2 in a agonist-dependent manner. Phosphorylation at Tyr-168 requires receptor activation, is dependent on non-receptor protein tyrosine kinase Src and results in a decrease in agonist efficacy by reducing G-protein coupling efficiency. Phosphorylated on tyrosine residues; the phosphorylation is involved in agonist-induced G-protein-independent receptor down-regulation. Phosphorylation at Ser-377 is involved in G-protein-dependent but not beta-arrestin-dependent activation of the ERK pathway. In terms of processing, ubiquitinated. A basal ubiquitination seems not to be related to degradation. Ubiquitination is increased upon formation of OPRM1:OPRD1 oligomers leading to proteasomal degradation; the ubiquitination is diminished by RTP4.

The protein resides in the cell membrane. It is found in the cell projection. Its subcellular location is the axon. It localises to the perikaryon. The protein localises to the dendrite. The protein resides in the endosome. In terms of biological role, receptor for endogenous opioids such as beta-endorphin and endomorphin. Receptor for natural and synthetic opioids including morphine, heroin, DAMGO, fentanyl, etorphine, buprenorphin and methadone. Also activated by enkephalin peptides, such as Met-enkephalin or Met-enkephalin-Arg-Phe, with higher affinity for Met-enkephalin-Arg-Phe. Agonist binding to the receptor induces coupling to an inactive GDP-bound heterotrimeric G-protein complex and subsequent exchange of GDP for GTP in the G-protein alpha subunit leading to dissociation of the G-protein complex with the free GTP-bound G-protein alpha and the G-protein beta-gamma dimer activating downstream cellular effectors. The agonist- and cell type-specific activity is predominantly coupled to pertussis toxin-sensitive G(i) and G(o) G alpha proteins, GNAI1, GNAI2, GNAI3 and GNAO1, and to a lesser extent to pertussis toxin-insensitive G alpha proteins GNAZ and GNA15. They mediate an array of downstream cellular responses, including inhibition of adenylate cyclase activity and both N-type and L-type calcium channels, activation of inward rectifying potassium channels, mitogen-activated protein kinase (MAPK), phospholipase C (PLC), phosphoinositide/protein kinase (PKC), phosphoinositide 3-kinase (PI3K) and regulation of NF-kappa-B. Also couples to adenylate cyclase stimulatory G alpha proteins. The selective temporal coupling to G-proteins and subsequent signaling can be regulated by RGSZ proteins, such as RGS9, RGS17 and RGS4. Phosphorylation by members of the GPRK subfamily of Ser/Thr protein kinases and association with beta-arrestins is involved in short-term receptor desensitization. Beta-arrestins associate with the GPRK-phosphorylated receptor and uncouple it from the G-protein thus terminating signal transduction. The phosphorylated receptor is internalized through endocytosis via clathrin-coated pits which involves beta-arrestins. The activation of the ERK pathway occurs either in a G-protein-dependent or a beta-arrestin-dependent manner and is regulated by agonist-specific receptor phosphorylation. Acts as a class A G-protein coupled receptor (GPCR) which dissociates from beta-arrestin at or near the plasma membrane and undergoes rapid recycling. Receptor down-regulation pathways are varying with the agonist and occur dependent or independent of G-protein coupling. Endogenous ligands induce rapid desensitization, endocytosis and recycling. Heterooligomerization with other GPCRs can modulate agonist binding, signaling and trafficking properties. Involved in neurogenesis. This is Mu-type opioid receptor (OPRM1) from Macaca mulatta (Rhesus macaque).